Here is an 863-residue protein sequence, read N- to C-terminus: Valine--tRNA ligase (863 aa).

The 'HIGH' region signature appears at 43–53; the sequence is PYPTGSFHIGH. Residues 517–521 carry the 'KMSKS' region motif; it reads KMSKS. Residue K520 participates in ATP binding.

Belongs to the class-I aminoacyl-tRNA synthetase family. ValS type 2 subfamily.

It is found in the cytoplasm. It catalyses the reaction tRNA(Val) + L-valine + ATP = L-valyl-tRNA(Val) + AMP + diphosphate. In terms of biological role, catalyzes the attachment of valine to tRNA(Val). As ValRS can inadvertently accommodate and process structurally similar amino acids such as threonine, to avoid such errors, it has a 'posttransfer' editing activity that hydrolyzes mischarged Thr-tRNA(Val) in a tRNA-dependent manner. In Archaeoglobus fulgidus (strain ATCC 49558 / DSM 4304 / JCM 9628 / NBRC 100126 / VC-16), this protein is Valine--tRNA ligase.